The primary structure comprises 200 residues: 7-methyl-GTP pyrophosphatase (200 aa).

Aspartate 75 functions as the Proton acceptor in the catalytic mechanism.

Belongs to the Maf family. YceF subfamily. It depends on a divalent metal cation as a cofactor.

It is found in the cytoplasm. It catalyses the reaction N(7)-methyl-GTP + H2O = N(7)-methyl-GMP + diphosphate + H(+). Its function is as follows. Nucleoside triphosphate pyrophosphatase that hydrolyzes 7-methyl-GTP (m(7)GTP). May have a dual role in cell division arrest and in preventing the incorporation of modified nucleotides into cellular nucleic acids. The protein is 7-methyl-GTP pyrophosphatase of Hydrogenovibrio crunogenus (strain DSM 25203 / XCL-2) (Thiomicrospira crunogena).